We begin with the raw amino-acid sequence, 541 residues long: 1'-carboxy-chondrochloren decarboxylase (541 aa).

The region spanning 39–226 (TTHRIPAIIS…TRMTIWLAPR (188 aa)) is the FAD-binding PCMH-type domain.

It carries out the reaction 1'-carboxy-chondrochloren A + FAD + 2 H(+) = chondrochloren A + FADH2 + CO2. It catalyses the reaction 1'-carboxy-chondrochloren B + FAD + 2 H(+) = chondrochloren B + FADH2 + CO2. Its pathway is antibiotic biosynthesis. With respect to regulation, activity is not affected by the addition of EDTA or/and EGTA chelators or in the presence of external metals like Zn(2+), Mg(2+), Mn(2+) and Fe(2+). Activity is inhibited under low oxygen conditions. Functionally, oxidative decarboxylase involved in the biosynthesis of the antibiotics chondrochloren A and chondrochloren B. Catalyzes the decarboxylation of biologically inactive pre-chondrochloren A and pre-chondrochloren B to yield mature chondrochloren A and chondrochloren B, respectively. Cannot decarboxylate free L-tyrosine, 3-chloro-tyrosine or a number of chlorinated and non-chlorinated analog substrates containing variable N-acyl chains. The protein is 1'-carboxy-chondrochloren decarboxylase of Chondromyces crocatus.